A 79-amino-acid chain; its full sequence is MTDIKIDQTLDTLGLRCPEPVMLTRKTIRNMAEGEVLLIVADDPATTRDISSFCEFMDHQLLNSETENTPYRYWVKKGL.

Catalysis depends on Cys-17, which acts as the Cysteine persulfide intermediate.

It belongs to the sulfur carrier protein TusA family.

It localises to the cytoplasm. Its function is as follows. Sulfur carrier protein which probably makes part of a sulfur-relay system. This chain is Sulfur carrier protein TusA, found in Actinobacillus pleuropneumoniae serotype 5b (strain L20).